The following is a 197-amino-acid chain: FMN-dependent NADH:quinone oxidoreductase (197 aa).

FMN-binding positions include S10 and 17-19 (SFS).

This sequence belongs to the azoreductase type 1 family. As to quaternary structure, homodimer. The cofactor is FMN.

It catalyses the reaction 2 a quinone + NADH + H(+) = 2 a 1,4-benzosemiquinone + NAD(+). The catalysed reaction is N,N-dimethyl-1,4-phenylenediamine + anthranilate + 2 NAD(+) = 2-(4-dimethylaminophenyl)diazenylbenzoate + 2 NADH + 2 H(+). In terms of biological role, quinone reductase that provides resistance to thiol-specific stress caused by electrophilic quinones. Its function is as follows. Also exhibits azoreductase activity. Catalyzes the reductive cleavage of the azo bond in aromatic azo compounds to the corresponding amines. In Mycoplasmoides gallisepticum (strain R(low / passage 15 / clone 2)) (Mycoplasma gallisepticum), this protein is FMN-dependent NADH:quinone oxidoreductase.